Reading from the N-terminus, the 62-residue chain is MEREGKEDVRKADHKIVYGIERVRHGINNFFDDVGKAVKSESDTADSKRSAEAKADEAPAKM.

The interval 38–62 is disordered; sequence VKSESDTADSKRSAEAKADEAPAKM.

This is an uncharacterized protein from Schizosaccharomyces pombe (strain 972 / ATCC 24843) (Fission yeast).